Here is a 212-residue protein sequence, read N- to C-terminus: Large ribosomal subunit protein mL48 (212 aa).

Residues 1-28 (MNGALGKVLCLKNDTIFKQAFSLLRFRT) constitute a mitochondrion transit peptide. An N6-succinyllysine modification is found at Lys199.

It belongs to the mitochondrion-specific ribosomal protein mL48 family. Component of the mitochondrial ribosome large subunit (39S) which comprises a 16S rRNA and about 50 distinct proteins. Interacts with OXA1L.

The protein localises to the mitochondrion. This chain is Large ribosomal subunit protein mL48 (MRPL48), found in Bos taurus (Bovine).